We begin with the raw amino-acid sequence, 364 residues long: Capsular polysaccharide phosphotransferase cps1A (364 aa).

The protein belongs to the stealth family.

Functionally, part of a capsular polysaccharide synthesis locus. In Actinobacillus pleuropneumoniae (Haemophilus pleuropneumoniae), this protein is Capsular polysaccharide phosphotransferase cps1A (cps1A).